The primary structure comprises 221 residues: MSSRPGREDVGAAGARRPREPPEQELQRRREQKRRRHDAQQLQQLKHLESFYEKPPPGLIKEDETKPEDCIPDVPGNEHAREFLAHAPTKGLWMPLGKEVKVMQCWRCKRYGHRTGDKECPFFIKGNQKLEQFRVAHEDPMYDIIRDNKRHEKDVRIQQLKQLLEDSTSDEDRSSSSSSEGKEKHKKKKKKEKHKKRKKEKKKKKKRKHKSSKSNEGSDSE.

3 stretches are compositionally biased toward basic and acidic residues: residues 1-10 (MSSRPGREDV), 17-29 (RPREPPEQELQRR), and 60-69 (IKEDETKPED). The interval 1–76 (MSSRPGREDV…PEDCIPDVPG (76 aa)) is disordered. Positions 1 to 155 (MSSRPGREDV…RDNKRHEKDV (155 aa)) are PIM1-binding. The segment at 104–122 (QCWRCKRYGHRTGDKECPF) adopts a CCHC-type zinc-finger fold. K129 participates in a covalent cross-link: Glycyl lysine isopeptide (Lys-Gly) (interchain with G-Cter in SUMO2). A compositionally biased stretch (basic and acidic residues) spans 147–156 (DNKRHEKDVR). The tract at residues 147-221 (DNKRHEKDVR…SKSNEGSDSE (75 aa)) is disordered. Positions 184 to 212 (KHKKKKKKEKHKKRKKEKKKKKKRKHKSS) are enriched in basic residues. Phosphoserine; by PIM1 is present on residues S212 and S214.

Binds to PIM1. Binds to ZNHIT4. Appears to be expressed in a wide range of tissues.

The protein resides in the nucleus. Functionally, is thought to be a target protein for the PIM1 kinase. May play some roles in B-cell proliferation in association with PIM1. In Homo sapiens (Human), this protein is Retinitis pigmentosa 9 protein (RP9).